Reading from the N-terminus, the 448-residue chain is MSLIASDHFRIVVGLGKSGMSLVRFLANRGVAFAVADTRENPPELATLQRDYPHVEVRCGELDVEFLCRADELYVSPGLALATPALQAAAARGVKLSGDIELFARNAKAPIVAISGSNAKSTVTTLVGEMAAAAGKRVAVGGNLGTPALDLLSDDVELYVMELSSFQLETTDQLNAEVATVLNISEDHMDRYSGLPAYHLAKHRIFRGAKQFVVNRQDALTRPLMGEGQPCWTFGLSKPDFKAFGLREENGEKYLAFEFQNLMPVRELKIRGAHNQSNALAALALGHAVGLPFDAMLVALRTFAGLEHRCQWVRDLDGVGYYNDSKATNVGAALAAIEGLGADIDGKVVLIAGGDGKGAEFKDLRDPVATHCRAVILMGRDSDKIGEAIGDAVPLIRATTLVDAVAQCRAAAQPGDVVLLSPACASFDMFNNYEDRGHQFVRAVEDLA.

116–122 (GSNAKST) contributes to the ATP binding site.

This sequence belongs to the MurCDEF family.

It localises to the cytoplasm. The catalysed reaction is UDP-N-acetyl-alpha-D-muramoyl-L-alanine + D-glutamate + ATP = UDP-N-acetyl-alpha-D-muramoyl-L-alanyl-D-glutamate + ADP + phosphate + H(+). Its pathway is cell wall biogenesis; peptidoglycan biosynthesis. In terms of biological role, cell wall formation. Catalyzes the addition of glutamate to the nucleotide precursor UDP-N-acetylmuramoyl-L-alanine (UMA). In Pseudomonas fluorescens (strain Pf0-1), this protein is UDP-N-acetylmuramoylalanine--D-glutamate ligase.